Reading from the N-terminus, the 205-residue chain is Large ribosomal subunit protein uL3 (205 aa).

This sequence belongs to the universal ribosomal protein uL3 family. In terms of assembly, part of the 50S ribosomal subunit. Forms a cluster with proteins L14 and L19.

Functionally, one of the primary rRNA binding proteins, it binds directly near the 3'-end of the 23S rRNA, where it nucleates assembly of the 50S subunit. The polypeptide is Large ribosomal subunit protein uL3 (Thermosipho africanus (strain TCF52B)).